The following is a 282-amino-acid chain: Small ribosomal subunit protein uS2 (282 aa).

The tract at residues 260 to 282 (KRRRSKVYKEEEREVVTNEDESR) is disordered. A compositionally biased stretch (basic and acidic residues) spans 266-282 (VYKEEEREVVTNEDESR).

This sequence belongs to the universal ribosomal protein uS2 family.

This is Small ribosomal subunit protein uS2 from Wolbachia pipientis wMel.